A 267-amino-acid polypeptide reads, in one-letter code: Palmitoyltransferase ZDHHC12 (267 aa).

Over 1 to 9 the chain is Cytoplasmic; that stretch reads MALWPPLNS. Residues 10 to 30 traverse the membrane as a helical segment; the sequence is GMLVRTGHTVLTWGITLVLFL. Over 31–43 the chain is Lumenal; the sequence is HDTELRQWEEQGE. A helical membrane pass occupies residues 44-64; it reads LLLPLTFLLLVLSSLLLYLAV. Residues 65–140 are Cytoplasmic-facing; that stretch reads SLMDPGYVTT…ENCVGERNHP (76 aa). A DHHC domain is found at 97–147; that stretch reads RRCRHCLVLQPLRARHCRDCRRCVRRYDHHCPWMENCVGERNHPLFVAYLA. Catalysis depends on Cys127, which acts as the S-palmitoyl cysteine intermediate. The helical transmembrane segment at 141–161 threads the bilayer; it reads LFVAYLALQLVVLLWGLCLAW. The Lumenal segment spans residues 162–178; the sequence is SGLQFFQPWGLWLRSTG. A helical membrane pass occupies residues 179–199; that stretch reads LLFTTFLLLSFFALVVALLLA. Topologically, residues 200 to 267 are cytoplasmic; the sequence is SHLYLVARNT…EEEEGSSQVV (68 aa).

Belongs to the DHHC palmitoyltransferase family.

It localises to the golgi apparatus membrane. Its subcellular location is the endoplasmic reticulum membrane. It catalyses the reaction L-cysteinyl-[protein] + hexadecanoyl-CoA = S-hexadecanoyl-L-cysteinyl-[protein] + CoA. Its function is as follows. Palmitoyltransferase that catalyzes the addition of palmitate onto various protein substrates. Has a palmitoyltransferase activity toward gephyrin/GPHN, regulating its clustering at synapses and its function in gamma-aminobutyric acid receptor clustering. Thereby, indirectly regulates GABAergic synaptic transmission. Negatively regulates NLRP3-driven inflammation. Catalyzes NLRP3 palmitoylation, leading to its degradation via the chaperone-mediated autophagy (CMA) process. This Mus musculus (Mouse) protein is Palmitoyltransferase ZDHHC12.